The primary structure comprises 211 residues: DNA/RNA-binding protein ALBA2 (211 aa).

Over residues 84–99 the composition is skewed to basic and acidic residues; it reads NSGLKKNAKNEDKKSG. Residues 84–121 form a disordered region; that stretch reads NSGLKKNAKNEDKKSGDEEEEEEEEEEDEENNKNKEAN. The segment covering 100 to 113 has biased composition (acidic residues); that stretch reads DEEEEEEEEEEDEE.

This sequence belongs to the histone-like Alba family. Identified in a TARE6-associated complex consisting of over 30 proteins and including ALBA1, ALBA2 and ALBA4; the complex binds to the non-coding subtelomeric repeat region TARE6.

The protein resides in the nucleus. Its subcellular location is the chromosome. It localises to the telomere. It is found in the cytoplasm. In terms of biological role, possesses DNA- and RNA-binding activities. Binds to DNA with relaxed sequence specificity. Associates with the subtelomeric TARE6 repeats. The chain is DNA/RNA-binding protein ALBA2 from Plasmodium falciparum (isolate 3D7).